The sequence spans 144 residues: Protein MIX23 (144 aa).

An N-acetylalanine modification is found at A2. A coiled-coil region spans residues 82–120; that stretch reads VKNLREEREKNLDDLTLLKQLRKEQTKLKWMQSELNVEE. An N6-acetyllysine modification is found at K100.

It belongs to the MIX23 family.

The chain is Protein MIX23 from Homo sapiens (Human).